A 938-amino-acid chain; its full sequence is Cyclin-dependent kinase-like 5 (938 aa).

Residues 13–297 (FEILGVVGEG…TEQCLNHPTF (285 aa)) enclose the Protein kinase domain. ATP is bound by residues 19–27 (VGEGAYGVV) and Lys42. Asp135 serves as the catalytic Proton acceptor. Disordered regions lie at residues 298–348 (QTQR…DIQN), 382–566 (KTYQ…RHSK), 646–865 (SPQP…LTAQ), and 877–938 (HPLS…KWKQ). 2 stretches are compositionally biased toward polar residues: residues 319-331 (ESSTLSNRNQSTK) and 382-402 (KTYQASTQPGSSSKDLTNNNI). Ser407 bears the Phosphoserine mark. Residues 407–417 (SPKEAKSKTEF) show a composition bias toward basic and acidic residues. Polar residues-rich tracts occupy residues 434-462 (LKSSTRSQQNRHSFMESSQSKAGTLQPSE), 473-482 (IPQSSRSPSY), and 494-548 (DSKS…SGRN). Ser479 carries the post-translational modification Phosphoserine. 2 stretches are compositionally biased toward basic and acidic residues: residues 549–559 (NRNEGTLDSRR) and 679–704 (QKSEGGVYHDPHSDDGTAPKENRHLY). Ser720 carries the phosphoserine modification. Over residues 728-748 (HENNVSTRVSSLPSDSSSGTN) the composition is skewed to polar residues. Position 761 is a phosphoserine (Ser761). 2 stretches are compositionally biased toward basic and acidic residues: residues 769–778 (DQLKEKEKQG) and 817–827 (RPKEWRPEKLS). Residues 880 to 891 (SQATGGSSNIRQ) show a composition bias toward polar residues.

The protein belongs to the protein kinase superfamily. CMGC Ser/Thr protein kinase family. CDC2/CDKX subfamily. In terms of assembly, interacts with MECP2. Post-translationally, autophosphorylated.

It localises to the nucleus. Its subcellular location is the cytoplasm. The protein localises to the cytoskeleton. The protein resides in the cilium basal body. It is found in the microtubule organizing center. It localises to the centrosome. It carries out the reaction L-seryl-[protein] + ATP = O-phospho-L-seryl-[protein] + ADP + H(+). The enzyme catalyses L-threonyl-[protein] + ATP = O-phospho-L-threonyl-[protein] + ADP + H(+). Mediates phosphorylation of MECP2. May regulate ciliogenesis. The protein is Cyclin-dependent kinase-like 5 of Mus musculus (Mouse).